A 208-amino-acid chain; its full sequence is FMN-dependent NADH:quinone oxidoreductase 4 (208 aa).

Belongs to the azoreductase type 1 family. As to quaternary structure, homodimer. Requires FMN as cofactor.

It carries out the reaction 2 a quinone + NADH + H(+) = 2 a 1,4-benzosemiquinone + NAD(+). The enzyme catalyses N,N-dimethyl-1,4-phenylenediamine + anthranilate + 2 NAD(+) = 2-(4-dimethylaminophenyl)diazenylbenzoate + 2 NADH + 2 H(+). Its function is as follows. Quinone reductase that provides resistance to thiol-specific stress caused by electrophilic quinones. Also exhibits azoreductase activity. Catalyzes the reductive cleavage of the azo bond in aromatic azo compounds to the corresponding amines. This Bacillus anthracis protein is FMN-dependent NADH:quinone oxidoreductase 4.